A 306-amino-acid chain; its full sequence is Ribonuclease BN (306 aa).

The Zn(2+) site is built by histidine 64, histidine 66, aspartate 68, histidine 69, histidine 141, aspartate 212, and histidine 270. Aspartate 68 serves as the catalytic Proton acceptor.

Belongs to the RNase Z family. RNase BN subfamily. In terms of assembly, homodimer. The cofactor is Zn(2+).

Functionally, zinc phosphodiesterase, which has both exoribonuclease and endoribonuclease activities. The polypeptide is Ribonuclease BN (Klebsiella pneumoniae subsp. pneumoniae (strain ATCC 700721 / MGH 78578)).